The primary structure comprises 351 residues: uncharacterized protein (351 aa).

Positions lysine 25–valine 67 are disordered. The span at proline 33–lysine 55 shows a compositional bias: low complexity.

This is an uncharacterized protein from Escherichia coli (strain K12).